A 270-amino-acid polypeptide reads, in one-letter code: Acyl-[acyl-carrier-protein]--UDP-N-acetylglucosamine O-acyltransferase (270 aa).

It belongs to the transferase hexapeptide repeat family. LpxA subfamily. As to quaternary structure, homotrimer.

It localises to the cytoplasm. It catalyses the reaction a (3R)-hydroxyacyl-[ACP] + UDP-N-acetyl-alpha-D-glucosamine = a UDP-3-O-[(3R)-3-hydroxyacyl]-N-acetyl-alpha-D-glucosamine + holo-[ACP]. The protein operates within glycolipid biosynthesis; lipid IV(A) biosynthesis; lipid IV(A) from (3R)-3-hydroxytetradecanoyl-[acyl-carrier-protein] and UDP-N-acetyl-alpha-D-glucosamine: step 1/6. Involved in the biosynthesis of lipid A, a phosphorylated glycolipid that anchors the lipopolysaccharide to the outer membrane of the cell. In Sinorhizobium medicae (strain WSM419) (Ensifer medicae), this protein is Acyl-[acyl-carrier-protein]--UDP-N-acetylglucosamine O-acyltransferase.